The sequence spans 453 residues: UPF0210 protein Mbar_A3181 (453 aa).

It belongs to the UPF0210 family.

The chain is UPF0210 protein Mbar_A3181 from Methanosarcina barkeri (strain Fusaro / DSM 804).